Reading from the N-terminus, the 335-residue chain is MQSFTDTPDFQLTTKNTPSVVMTSDLRKVYRTGFWMNQKVVSLKGCSLTVYQGETFGLLGPNGAGKTTLLKLLLGIIRPSGGKGLLLGQPLGDRHIKQRVGYLSENPYLYEYLTGWEFLELAAGLFEIPASVQRQRIPELLDLVGLSVADAQKKQMRRYSKGMLQRVGMAQALINDPELIFLDEPMSGLDPLGRYRMREIILSLKAAGKTIFFNSHILSEVEKICDRIAILSQGELVCSGSLDELLGSQNTYHVQGQNGDWEILKKWLANLVYEPDGYWQGTLQEDYYDFLASVRLMGGRIISMNLSRQSLEEFFINQIQKQDTSLHEVIDQSEV.

One can recognise an ABC transporter domain in the interval V21–N258. G60–T67 serves as a coordination point for ATP.

Belongs to the ABC transporter superfamily.

This is an uncharacterized protein from Nostoc sp. (strain PCC 7120 / SAG 25.82 / UTEX 2576).